A 579-amino-acid polypeptide reads, in one-letter code: Type II restriction enzyme FokI (579 aa).

Active-site residues include Asp450, Asp467, and Lys469.

As to quaternary structure, monomer, in which form it can cleave DNA. Homodimer when bound to DNA. Requires Mg(2+) as cofactor.

The catalysed reaction is Endonucleolytic cleavage of DNA to give specific double-stranded fragments with terminal 5'-phosphates.. An S subtype restriction enzyme that recognizes the asymmetric double-stranded sequence 5'-GGATG-3' and cleaves respectively 14 bases after G-1 (top strand) and 13 bases before C-1 (bottom strand). This chain is Type II restriction enzyme FokI, found in Planomicrobium okeanokoites (Planococcus okeanokoites).